Here is a 249-residue protein sequence, read N- to C-terminus: RING finger protein 223 (249 aa).

The segment at 1–44 (MSSGQQVWHTAVPPPRRSSSIASMPRSPSSAGSPRSPGTPGSER) is disordered. The segment covering 17-44 (RSSSIASMPRSPSSAGSPRSPGTPGSER) has biased composition (low complexity). The RING-type zinc finger occupies 51–102 (CSICFSGYDNIFKTPKELSCTHVFCLECLARLAAAQPVGRPGGEAVPCPFCR). Residues 199-219 (LVSALLLMLFCVALWPVQCAL) traverse the membrane as a helical segment. Positions 230–249 (PPRPPATSTAASPLGPLTDN) are disordered. Low complexity predominate over residues 235 to 249 (ATSTAASPLGPLTDN).

The protein localises to the membrane. In Homo sapiens (Human), this protein is RING finger protein 223 (RNF223).